The chain runs to 246 residues: tRNA pseudouridine synthase A (246 aa).

Catalysis depends on Asp52, which acts as the Nucleophile. Substrate is bound at residue Tyr111.

This sequence belongs to the tRNA pseudouridine synthase TruA family. As to quaternary structure, homodimer.

The enzyme catalyses uridine(38/39/40) in tRNA = pseudouridine(38/39/40) in tRNA. Functionally, formation of pseudouridine at positions 38, 39 and 40 in the anticodon stem and loop of transfer RNAs. In Borreliella burgdorferi (strain ZS7) (Borrelia burgdorferi), this protein is tRNA pseudouridine synthase A.